The chain runs to 193 residues: Peptidyl-tRNA hydrolase (193 aa).

A tRNA-binding site is contributed by Tyr-17. The active-site Proton acceptor is the His-22. Residues Tyr-68, Asn-70, and Asn-116 each contribute to the tRNA site.

It belongs to the PTH family. In terms of assembly, monomer.

It localises to the cytoplasm. The enzyme catalyses an N-acyl-L-alpha-aminoacyl-tRNA + H2O = an N-acyl-L-amino acid + a tRNA + H(+). Its function is as follows. Hydrolyzes ribosome-free peptidyl-tRNAs (with 1 or more amino acids incorporated), which drop off the ribosome during protein synthesis, or as a result of ribosome stalling. Catalyzes the release of premature peptidyl moieties from peptidyl-tRNA molecules trapped in stalled 50S ribosomal subunits, and thus maintains levels of free tRNAs and 50S ribosomes. This Acinetobacter baumannii (strain AB0057) protein is Peptidyl-tRNA hydrolase.